Consider the following 283-residue polypeptide: Serine/threonine-protein phosphatase Pgam5, mitochondrial (283 aa).

A helical membrane pass occupies residues 7-23 (MYGLPSAAVAVGTALLN).

The protein belongs to the phosphoglycerate mutase family. BPG-dependent PGAM subfamily. Interacts with skn-1.

It is found in the mitochondrion outer membrane. It carries out the reaction O-phospho-L-seryl-[protein] + H2O = L-seryl-[protein] + phosphate. The enzyme catalyses O-phospho-L-threonyl-[protein] + H2O = L-threonyl-[protein] + phosphate. Displays phosphatase activity for serine/threonine residues. Has apparently no phosphoglycerate mutase activity. This chain is Serine/threonine-protein phosphatase Pgam5, mitochondrial (pgam-5), found in Caenorhabditis briggsae.